The chain runs to 182 residues: Crossover junction endodeoxyribonuclease RuvC (182 aa).

Residues Asp-7, Glu-68, and Asp-141 contribute to the active site. Positions 7, 68, and 141 each coordinate Mg(2+).

Belongs to the RuvC family. Homodimer which binds Holliday junction (HJ) DNA. The HJ becomes 2-fold symmetrical on binding to RuvC with unstacked arms; it has a different conformation from HJ DNA in complex with RuvA. In the full resolvosome a probable DNA-RuvA(4)-RuvB(12)-RuvC(2) complex forms which resolves the HJ. Requires Mg(2+) as cofactor.

It localises to the cytoplasm. The enzyme catalyses Endonucleolytic cleavage at a junction such as a reciprocal single-stranded crossover between two homologous DNA duplexes (Holliday junction).. Functionally, the RuvA-RuvB-RuvC complex processes Holliday junction (HJ) DNA during genetic recombination and DNA repair. Endonuclease that resolves HJ intermediates. Cleaves cruciform DNA by making single-stranded nicks across the HJ at symmetrical positions within the homologous arms, yielding a 5'-phosphate and a 3'-hydroxyl group; requires a central core of homology in the junction. The consensus cleavage sequence is 5'-(A/T)TT(C/G)-3'. Cleavage occurs on the 3'-side of the TT dinucleotide at the point of strand exchange. HJ branch migration catalyzed by RuvA-RuvB allows RuvC to scan DNA until it finds its consensus sequence, where it cleaves and resolves the cruciform DNA. The sequence is that of Crossover junction endodeoxyribonuclease RuvC from Thermobifida fusca (strain YX).